We begin with the raw amino-acid sequence, 127 residues long: Major sperm protein isoform alpha (127 aa).

N-acetylalanine is present on Ala2. The MSP domain occupies 9–126; the sequence is DINTQPSQKI…RRKNLPIEYN (118 aa).

As to quaternary structure, forms filaments 10 nm wide, with a characteristic substructure repeating axially at 9 nm. In terms of tissue distribution, sperm.

It is found in the cell projection. The protein resides in the pseudopodium. The protein localises to the cytoplasm. It localises to the cytoskeleton. Its function is as follows. Central component in molecular interactions underlying sperm crawling. Forms an extensive filament system that extends from sperm villipoda, along the leading edge of the pseudopod. The chain is Major sperm protein isoform alpha from Ascaris suum (Pig roundworm).